We begin with the raw amino-acid sequence, 388 residues long: Dauer abnormal formation protein 25 (388 aa).

3 ANK repeats span residues 40-69 (SGMSVLAAAAYRGNLTLVEKAIELKCDVND), 74-103 (TLYTPLMFAALSGKQDVCRLLMDSGARMYL), and 107-137 (IGKTASELAAFVGHHECVAIINNHITIDVIE). The Zn(2+) site is built by cysteine 321, cysteine 324, cysteine 333, cysteine 336, cysteine 341, cysteine 345, histidine 353, and cysteine 357. The MYND-type zinc-finger motif lies at 321–357 (CSVCGHPGAKKRCTQCKLAYCSQECQKFDWPIHKKVC).

As to expression, expressed in many ciliated sensory neurons.

The protein localises to the cell projection. It is found in the cilium. Its function is as follows. May be involved in the trafficking and dendritic transport of signaling proteins, such as the receptor-type guanylate cyclases gcy-12 and daf-11, to the cilia. In ciliated sensory neurons, required for the calcium flux to the cytoplasm in response to onset and removal of a nitric oxide (NO) stimulus and is thereby required for the behavioral avoidance response to NO-producing organisms like P.aeruginosa. This chain is Dauer abnormal formation protein 25 (daf-25), found in Caenorhabditis elegans.